Reading from the N-terminus, the 128-residue chain is Putative lipid-binding protein At4g00165 (128 aa).

Residues 1 to 23 (MGISKALRSLLILLLLNITFFFG) form the signal peptide. 4 cysteine pairs are disulfide-bonded: Cys34–Cys90, Cys46–Cys76, Cys56–Cys75, and Cys92–Cys128.

Belongs to the plant LTP family. PEARLI1 subfamily.

The protein resides in the secreted. The polypeptide is Putative lipid-binding protein At4g00165 (Arabidopsis thaliana (Mouse-ear cress)).